The following is a 295-amino-acid chain: Nucleotide-binding protein llmg_1557 (295 aa).

12-19 (GMSGAGKT) contacts ATP. A GTP-binding site is contributed by 63–66 (DMRS).

Belongs to the RapZ-like family.

Functionally, displays ATPase and GTPase activities. This chain is Nucleotide-binding protein llmg_1557, found in Lactococcus lactis subsp. cremoris (strain MG1363).